Consider the following 310-residue polypeptide: Adenylyl-sulfate kinase 4, chloroplastic (310 aa).

A chloroplast-targeting transit peptide spans 1–75; sequence MDVAAMARCV…MAKDESISSR (75 aa). 116–124 is an ATP binding site; that stretch reads GLSGSGKSS. Substrate-binding positions include aspartate 146, arginine 149, arginine 163, asparagine 166, 189–190, and glycine 239; that span reads IS. The active-site Phosphoserine intermediate is serine 190.

The protein belongs to the APS kinase family. In terms of assembly, homodimer; disulfide-linked. Expressed in root vasculature, root tips, leaf epidermal and guard cells, pollen grains and radicle of immature seeds.

Its subcellular location is the plastid. It localises to the chloroplast. The catalysed reaction is adenosine 5'-phosphosulfate + ATP = 3'-phosphoadenylyl sulfate + ADP + H(+). Its pathway is sulfur metabolism; hydrogen sulfide biosynthesis; sulfite from sulfate: step 2/3. Its function is as follows. Catalyzes the phosphorylation of adenosine 5'-phosphosulfate to 3'-phosphoadenylyl sulfate, which is the activated sulfate form for sulfation reactions. Essential for plant reproduction and viability. The sequence is that of Adenylyl-sulfate kinase 4, chloroplastic (APK4) from Arabidopsis thaliana (Mouse-ear cress).